Consider the following 239-residue polypeptide: DNA repair protein RecO (239 aa).

This sequence belongs to the RecO family.

Involved in DNA repair and RecF pathway recombination. This Christiangramia forsetii (strain DSM 17595 / CGMCC 1.15422 / KT0803) (Gramella forsetii) protein is DNA repair protein RecO.